Here is a 1129-residue protein sequence, read N- to C-terminus: Phytochrome A type 3 (1129 aa).

Residues 1-21 (MSSSRPASSSSSRNRQSSQAR) show a composition bias toward low complexity. A disordered region spans residues 1–24 (MSSSRPASSSSSRNRQSSQARVLA). Positions 217 to 402 (SMEVLCNTVV…VFAVHVNREF (186 aa)) constitute a GAF domain. Cys322 is a phytochromobilin binding site. 2 PAS domains span residues 618–688 (VTSE…LQGK) and 748–822 (VEGD…VSLC). The region spanning 902 to 1122 (YMRHAINNPL…TFIITAELAS (221 aa)) is the Histidine kinase domain.

This sequence belongs to the phytochrome family. Homodimer. Contains one covalently linked phytochromobilin chromophore.

Its function is as follows. Regulatory photoreceptor which exists in two forms that are reversibly interconvertible by light: the Pr form that absorbs maximally in the red region of the spectrum and the Pfr form that absorbs maximally in the far-red region. Photoconversion of Pr to Pfr induces an array of morphogenic responses, whereas reconversion of Pfr to Pr cancels the induction of those responses. Pfr controls the expression of a number of nuclear genes including those encoding the small subunit of ribulose-bisphosphate carboxylase, chlorophyll A/B binding protein, protochlorophyllide reductase, rRNA, etc. It also controls the expression of its own gene(s) in a negative feedback fashion. The sequence is that of Phytochrome A type 3 (PHYA3) from Avena sativa (Oat).